A 314-amino-acid chain; its full sequence is Olfactory receptor 9A1 (314 aa).

The Extracellular portion of the chain corresponds to 1-24; sequence MLGNYSSATEFFLLGFPGSQEVCR. The N-linked (GlcNAc...) asparagine glycan is linked to asparagine 4. A helical membrane pass occupies residues 25–45; that stretch reads ILFATFFLLYAVTVMGNVVII. The Cytoplasmic portion of the chain corresponds to 46–64; it reads ITVCVDKCLQSPIYFFLGH. The helical transmembrane segment at 65 to 85 threads the bilayer; the sequence is LCVLEILITSTAVPFMLWGLL. The Extracellular segment spans residues 86–99; the sequence is LPSTQIMSLTACAA. Cysteines 97 and 179 form a disulfide. A helical membrane pass occupies residues 100–120; the sequence is QLYLYLSLGTLELALMGVMAV. The Cytoplasmic portion of the chain corresponds to 121–140; that stretch reads DRYVAVCNPLRYNIIMNSST. The chain crosses the membrane as a helical span at residues 141 to 161; it reads FIWVIIVSWVLGFLSEIWPVY. The Extracellular portion of the chain corresponds to 162–196; sequence ATFQLTFCKSSVLDHFYCDRGQLLKVSCEDTLFRE. The chain crosses the membrane as a helical span at residues 197-217; it reads FILFLMAVFIIIGSLIPTIVS. Residues 218–239 are Cytoplasmic-facing; it reads YTYIISTNLKIPSASGWRKSFS. A helical membrane pass occupies residues 240–260; that stretch reads TCASHFTYVVIGYGSCLFLYV. At 261–271 the chain is on the extracellular side; sequence KPKQTQAAEYN. A helical membrane pass occupies residues 272–292; the sequence is RVVSLLVLVVTPFLNPFIFTL. Topologically, residues 293-314 are cytoplasmic; it reads RNDKFIQAFGDGMKHCYKLLKN.

Belongs to the G-protein coupled receptor 1 family.

It is found in the cell membrane. Odorant receptor. The chain is Olfactory receptor 9A1 (OR9A1P) from Homo sapiens (Human).